Consider the following 433-residue polypeptide: MSHEGQEELLDYSDSEEIAVPTTTEVAGADSATDKEADKKGSYVGIHATGFRDFLLKPELLRAIGDCGFEHPSEVQQVCIPQSILGTDVLCQAKSGLGKTAVFVLSTLQQLDPVPGEISTLVICHTRELAYQIRNEYARFSKYMPDVKTEVFYGGTPIKRDIEKLKSKDTCPHIVVATPGRLHALVNEKAIRLSNVKSFVIDECDKVLESIDMRRDVQDIFRATPHQKQVMMFSATLSQEIRPVCKKFMQNPLEIYVDDEAKLTLHGLQQYYIKLEEKEKNRKLSDLLDSLEFNQVIIFVKSTQRANELNKLLCSCNFPSIAVHSGLPQEERIERYRSFKEFNKRICVSTDVFGRGIDIERINLAINYDLPNEADQYLHRVGRAGRFGTKGLAISLVGSKEDEEVLEKIQSRFDVKITEFPEEGVDPSTYMNT.

The Q motif motif lies at 49–77; that stretch reads TGFRDFLLKPELLRAIGDCGFEHPSEVQQ. Positions 80-255 constitute a Helicase ATP-binding domain; that stretch reads IPQSILGTDV…KKFMQNPLEI (176 aa). 93-100 lines the ATP pocket; the sequence is AKSGLGKT. Positions 202–205 match the DEAD box motif; sequence DECD. A Helicase C-terminal domain is found at 267–428; sequence GLQQYYIKLE…EFPEEGVDPS (162 aa).

This sequence belongs to the DEAD box helicase family. DECD subfamily.

The protein resides in the nucleus. It catalyses the reaction ATP + H2O = ADP + phosphate + H(+). In terms of biological role, ATP-binding RNA helicase involved in transcription elongation and required for the export of mRNA out of the nucleus. SUB2 also plays a role in pre-mRNA splicing and spliceosome assembly. May be involved in rDNA and telomeric silencing, and maintenance of genome integrity. In Scheffersomyces stipitis (strain ATCC 58785 / CBS 6054 / NBRC 10063 / NRRL Y-11545) (Yeast), this protein is ATP-dependent RNA helicase SUB2 (SUB2).